The sequence spans 92 residues: Large ribosomal subunit protein eL43 (92 aa).

Zn(2+) is bound by residues C39, C42, C57, and C60. A C4-type zinc finger spans residues 39–60 (CPNCGEDRVDRQGTGIWQCSYC).

This sequence belongs to the eukaryotic ribosomal protein eL43 family. Putative zinc-binding subfamily. In terms of assembly, part of the 50S ribosomal subunit. Contacts protein L2. Requires Zn(2+) as cofactor.

In terms of biological role, binds to the 23S rRNA. The sequence is that of Large ribosomal subunit protein eL43 from Haloarcula marismortui (strain ATCC 43049 / DSM 3752 / JCM 8966 / VKM B-1809) (Halobacterium marismortui).